The following is a 90-amino-acid chain: Probable Fe(2+)-trafficking protein (90 aa).

Belongs to the Fe(2+)-trafficking protein family.

In terms of biological role, could be a mediator in iron transactions between iron acquisition and iron-requiring processes, such as synthesis and/or repair of Fe-S clusters in biosynthetic enzymes. The polypeptide is Probable Fe(2+)-trafficking protein (Coxiella burnetii (strain CbuG_Q212) (Coxiella burnetii (strain Q212))).